We begin with the raw amino-acid sequence, 180 residues long: Decaprenylphosphoryl-5-phosphoribose phosphatase (180 aa).

4 consecutive transmembrane segments (helical) span residues 31–51 (ALSH…AGAL), 61–81 (LAVG…KRVV), 116–136 (VLLA…PMAL), and 139–159 (LVLG…GALV).

The protein belongs to the PA-phosphatase related phosphoesterase family.

The protein resides in the cell membrane. The enzyme catalyses trans,octa-cis-decaprenylphospho-beta-D-ribofuranose 5-phosphate + H2O = trans,octa-cis-decaprenylphospho-beta-D-ribofuranose + phosphate. It participates in cell wall biogenesis; cell wall polysaccharide biosynthesis. Phosphatase involved in the biosynthesis of decaprenylphosphoryl arabinose (DPA), which serves as the arabinose donor for the biosynthesis of arabinogalactan, the major mycobacterial cell wall polysaccharide. Catalyzes the dephosphorylation of decaprenylphosphoryl-5-phosphoribose (DPPR) to decaprenyl-phosphoribose (DPR). This chain is Decaprenylphosphoryl-5-phosphoribose phosphatase, found in Mycolicibacterium smegmatis (strain ATCC 700084 / mc(2)155) (Mycobacterium smegmatis).